A 307-amino-acid chain; its full sequence is Murein tetrapeptide carboxypeptidase (307 aa).

S115 (nucleophile) is an active-site residue. Residues E217 and H285 each act as charge relay system in the active site.

It belongs to the peptidase S66 family. In terms of assembly, homodimer.

The protein localises to the cytoplasm. The enzyme catalyses N-acetyl-D-glucosaminyl-N-acetylmuramoyl-L-alanyl-meso-2,6-diaminoheptanedioyl-D-alanine + H2O = N-acetyl-D-glucosaminyl-N-acetylmuramoyl-L-alanyl-meso-2,6-diaminoheptanedioate + D-alanine. It functions in the pathway cell wall biogenesis; peptidoglycan recycling. Its function is as follows. Releases the terminal D-alanine residue from the cytoplasmic disaccharide-tetrapeptide GlcNAc-MurNAc-L-Ala-gamma-D-Glu-meso-Dap-D-Ala, which is a murein turnover product. Probably also act on free tetrapetide. May be involved in murein recycling. This chain is Murein tetrapeptide carboxypeptidase, found in Pseudomonas aeruginosa (strain ATCC 15692 / DSM 22644 / CIP 104116 / JCM 14847 / LMG 12228 / 1C / PRS 101 / PAO1).